We begin with the raw amino-acid sequence, 575 residues long: Cytochrome P450 monooxygenase opaB (575 aa).

Asn6 is a glycosylation site (N-linked (GlcNAc...) asparagine). Residues Phe37 to Ser57 form a helical membrane-spanning segment. N-linked (GlcNAc...) asparagine glycans are attached at residues Asn83 and Asn242. Cys521 lines the heme pocket.

Belongs to the cytochrome P450 family. Heme is required as a cofactor.

The protein localises to the membrane. It participates in secondary metabolite biosynthesis. Functionally, cytochrome P450 monooxygenase; part of the gene cluster that mediates the biosynthesis of oxepinamides, derivatives of anthranilyl-containing tripeptides that share an oxepin ring and a fused pyrimidinone moiety. The nonribosomal peptide synthetase (NRPS) opaA assembles the quinazolinone core with D-Phe incorporation. The first adenylation domain (A1) of opaA loads and activates anthranilic acid whereas the second A domain (A2) is for activating of L-Phe, which is then converted to D-form by the E domain. The third A domain (A3) is responsible for L-Ile activation and the terminal condensation domain C3 for cyclization and releasing the NRPS product protuboxepin K. The cytochrome P450 monooxygenase opaB then catalyzes alone the oxepin ring formation to convert protuboxepin K into protuboxepin A. The flavoenzyme opaC installs subsequently one hydroxyl group at the oxepin ring, accompanied by double bond migration, to form 15-epi-oxepinamide E. The epimerase opaE changes the D-Phe residue back to L-form, leading to oxepinamide E, which is further methylated at the hydroxyl group at C-12 by the O-methyltransferase OpaF to yield oxepinamide F. In Aspergillus ustus, this protein is Cytochrome P450 monooxygenase opaB.